Here is a 175-residue protein sequence, read N- to C-terminus: Small ribosomal subunit protein uS5 (175 aa).

An S5 DRBM domain is found at Leu11–Val74.

This sequence belongs to the universal ribosomal protein uS5 family. In terms of assembly, part of the 30S ribosomal subunit. Contacts proteins S4 and S8.

Its function is as follows. With S4 and S12 plays an important role in translational accuracy. Located at the back of the 30S subunit body where it stabilizes the conformation of the head with respect to the body. This chain is Small ribosomal subunit protein uS5, found in Rickettsia prowazekii (strain Madrid E).